A 254-amino-acid chain; its full sequence is MELHFNLELVETYKSNSQKARILTEDWVYRQSYCPNCGNNPLNHFENNRPVADFYCNHCSEEFELKSKKGNFSSTINDGAYATMMKRVQADNNPNFFFLTYTKNFEVNNFLVLPKQFVTPKSIIQRKPLAPTARRAGWIGCNIDLSQVPSKGRIFLVQDGQVRDPEKVTKEFKQGLFLRKSSLSSRGWTIEILNCIDKIEGSEFTLEDMYRFESDLKNIFVKNNHIKEKIRQQLQILRDKEIIEFKGRGKYRKL.

It belongs to the DpnI type II restriction endonuclease family.

It carries out the reaction Endonucleolytic cleavage of DNA to give specific double-stranded fragments with terminal 5'-phosphates.. In terms of biological role, an M and P subtype restriction enzyme that recognizes the double-stranded, methylated sequence 5'-G(Me)ATC-3' and cleaves after A-2. This is Type II methyl-directed restriction enzyme DpnI from Streptococcus pneumoniae serotype 4 (strain ATCC BAA-334 / TIGR4).